We begin with the raw amino-acid sequence, 175 residues long: Co-chaperone protein HscB homolog (175 aa).

Positions 7 to 79 (SHFDLFHLPA…LKRASYLLSL (73 aa)) constitute a J domain.

Belongs to the HscB family. Interacts with HscA and stimulates its ATPase activity.

In terms of biological role, co-chaperone involved in the maturation of iron-sulfur cluster-containing proteins. Seems to help targeting proteins to be folded toward HscA. This chain is Co-chaperone protein HscB homolog, found in Burkholderia cenocepacia (strain ATCC BAA-245 / DSM 16553 / LMG 16656 / NCTC 13227 / J2315 / CF5610) (Burkholderia cepacia (strain J2315)).